Reading from the N-terminus, the 726-residue chain is MDIKDVSNESKYIDYLKQLQGAAERAARRKGQALMANSYRSQSDENTIATTLVPAPYPPCIVSANDLEAIMISDMRLETHHRGKKIMLRVLTPPDRMTAVMAIVEDEKGIAVLLQLYHQPEESIVPATEILSPNMVCILKEPFFKCATDGTYSLRVDHPGDIIWMDGADDRIPSHWRPSMVILGENSSDIRKQGKGAVQSKKWAEALRLYSSAIQAGQNVQERQLAFLNRSFVNMNMDRPKQALLDAEKATNPAMPSEKSLFRKARALYELGDYQQSLEMLEKLTQSYPENKAASSEKDRLNERLNEQRTGEYKFKQMYKQAEKTPPLIDCVTFSAPVEIRESPGRGKALFTTKAVSAGELLLCKKAFSYSFAGDEQSTKQTKILMNLATKRVVVGGQARLLTLIMQKLYHNSSLSAEFGDLHHADYQKAMVLETDGTPVVDSFLVEKIASLNGFGAPRTSRESFLQVLSSNRDMTGDEGFKYTTSGIWLLASRINHSCVGNCRPSFIGDMQIVRATKDVPAKTEIFFCYRPPVPFESYQETQKGLNHWGFTCDCGLCLRKKATSKAVFQRRKVLADDLQRLLDYPGSGNEAKSSRLMKALEKTYLTNNDCAIRLELWEPYFAFGAHLLKNNQLDIAAKMILKGLEALVHSIIACPPNDITDGPRLKVERWGVANDAVPWAFKNLANVYGQLAPELCSAAENYAEVSYTMVVGEKETWPEVLSSSS.

TPR repeat units lie at residues 187–220 (SSDIRKQGKGAVQSKKWAEALRLYSSAIQAGQNV), 224–257 (QLAFLNRSFVNMNMDRPKQALLDAEKATNPAMPS), and 258–291 (EKSLFRKARALYELGDYQQSLEMLEKLTQSYPEN). One can recognise an SET domain in the interval 336-531 (APVEIRESPG…AKTEIFFCYR (196 aa)). An S-adenosyl-L-methionine-binding site is contributed by Y530.

The protein belongs to the class V-like SAM-binding methyltransferase superfamily.

It participates in mycotoxin biosynthesis. Its function is as follows. Methyltransferase; part of the gene cluster that mediates the biosynthesis of gramillins A and B, bicyclic lipopeptides that induce cell death in maize leaves but not in wheat leaves. The nonribosomal peptide synthetase GRA1 incorporates respectively a glutamic adic (Glu), a leucine (Leu), a serine (Ser), a hydroxyglutamine (HOGln), a 2-amino decanoic acid, and 2 cysteins (CysB and CysA). The biosynthesis of 2-amino decanoic acid incorporated in gramillins could be initiated by a fatty acid synthase composed of the alpha and beta subunits FGSG_00036 and FGSG_11656. The cytochrome P450 monooxygenase FGSG_15680 could hydroxylate the fatty acid chain. Subsequent oxidation to the ketone by the oxidoreductase FGSG_00048 and transamination by aminotransferase FGSG_00049 could form 2-amino-decanoic acid. On the other hand, FGSG_15680 could also be responsible for the HO-modified glutamine at the gamma-position. Whether hydroxylation occurs on the fully assembled product or on the Gln residue prior to assembly into the gramillins requires further proof. The thioredoxin FGSG_00043 could also be required for the disulfide-bond formation between CysA and CysB. The specific involvement of the remaining proteins from the cluster is more difficult to discern, but could have broader regulatory (FGSG_00040 and FGSG_11657) or enzymatic functions (FGSG_00044 and FGSG_00045). The final C-domain of GRA1 does not possess the expected sequence of a termination CT domain, often implicated in macrocyclization and release of a cyclopeptidein fungal NRPs; and the thioesterase FGSG_00047 may act in concert with the terminal C-domain of GRA1 to catalyze the formation of the macrocyclic anhydride and release of the products. This is Methyltransferase FGSG_00040 from Gibberella zeae (strain ATCC MYA-4620 / CBS 123657 / FGSC 9075 / NRRL 31084 / PH-1) (Wheat head blight fungus).